The chain runs to 277 residues: Large ribosomal subunit protein uL2 (277 aa).

Positions 222–277 (GVAMNPVDHPHGGGEGRTSGGRHPVSPWGKPTKGKRTRSNKATDKFIMRTRHQRKK) are disordered.

Belongs to the universal ribosomal protein uL2 family. As to quaternary structure, part of the 50S ribosomal subunit. Forms a bridge to the 30S subunit in the 70S ribosome.

Its function is as follows. One of the primary rRNA binding proteins. Required for association of the 30S and 50S subunits to form the 70S ribosome, for tRNA binding and peptide bond formation. It has been suggested to have peptidyltransferase activity; this is somewhat controversial. Makes several contacts with the 16S rRNA in the 70S ribosome. This Bartonella henselae (strain ATCC 49882 / DSM 28221 / CCUG 30454 / Houston 1) (Rochalimaea henselae) protein is Large ribosomal subunit protein uL2.